Here is a 684-residue protein sequence, read N- to C-terminus: DNA ligase (684 aa).

Residues 34–38, 83–84, and Glu117 each bind NAD(+); these read DFQYD and SL. The active-site N6-AMP-lysine intermediate is Lys119. Positions 140, 186, 300, and 324 each coordinate NAD(+). Zn(2+) contacts are provided by Cys418, Cys421, Cys436, and Cys442. The 84-residue stretch at 601 to 684 folds into the BRCT domain; sequence PVNLNFDGMK…EMLGEVGSNE (84 aa).

Belongs to the NAD-dependent DNA ligase family. LigA subfamily. The cofactor is Mg(2+). Requires Mn(2+) as cofactor.

It catalyses the reaction NAD(+) + (deoxyribonucleotide)n-3'-hydroxyl + 5'-phospho-(deoxyribonucleotide)m = (deoxyribonucleotide)n+m + AMP + beta-nicotinamide D-nucleotide.. In terms of biological role, DNA ligase that catalyzes the formation of phosphodiester linkages between 5'-phosphoryl and 3'-hydroxyl groups in double-stranded DNA using NAD as a coenzyme and as the energy source for the reaction. It is essential for DNA replication and repair of damaged DNA. In Chlorobium phaeobacteroides (strain BS1), this protein is DNA ligase.